Consider the following 330-residue polypeptide: Ferredoxin--NADP reductase (330 aa).

7 residues coordinate FAD: Glu-34, Gln-42, Tyr-47, Val-87, Phe-121, Asp-285, and Ser-325.

The protein belongs to the ferredoxin--NADP reductase type 2 family. In terms of assembly, homodimer. FAD is required as a cofactor.

It catalyses the reaction 2 reduced [2Fe-2S]-[ferredoxin] + NADP(+) + H(+) = 2 oxidized [2Fe-2S]-[ferredoxin] + NADPH. The chain is Ferredoxin--NADP reductase from Limosilactobacillus fermentum (strain NBRC 3956 / LMG 18251) (Lactobacillus fermentum).